The sequence spans 879 residues: Pentatricopeptide repeat-containing protein At1g71210, mitochondrial (879 aa).

The N-terminal 44 residues, 1–44 (MLRCWSVTVERSCEGMLLRRRILSLSASSFRNFTSGNNGDAIPF), are a transit peptide targeting the mitochondrion. 16 PPR repeats span residues 181-215 (SLRL…GLDL), 216-246 (DSFG…ISVR), 250-280 (CAVT…LLPN), 285-319 (CGSG…GTVN), 320-355 (MDRA…GCEL), 356-390 (EVFR…GVSP), 391-425 (NKKT…GFAP), 426-460 (TAMS…GHFL), 461-495 (GGKT…DLLP), 496-530 (KRIA…GVDT), 531-565 (SFKM…GYTP), 566-597 (TRSL…FQLS), 602-636 (KVQA…GITP), 637-667 (TVAS…LREQ), 671-705 (KKRL…GLQP), and 706-740 (SIEC…GRRI).

This sequence belongs to the PPR family. P subfamily.

The protein localises to the mitochondrion. This Arabidopsis thaliana (Mouse-ear cress) protein is Pentatricopeptide repeat-containing protein At1g71210, mitochondrial.